The following is a 252-amino-acid chain: Aspartate/glutamate leucyltransferase (252 aa).

It belongs to the R-transferase family. Bpt subfamily.

Its subcellular location is the cytoplasm. It carries out the reaction N-terminal L-glutamyl-[protein] + L-leucyl-tRNA(Leu) = N-terminal L-leucyl-L-glutamyl-[protein] + tRNA(Leu) + H(+). It catalyses the reaction N-terminal L-aspartyl-[protein] + L-leucyl-tRNA(Leu) = N-terminal L-leucyl-L-aspartyl-[protein] + tRNA(Leu) + H(+). Functions in the N-end rule pathway of protein degradation where it conjugates Leu from its aminoacyl-tRNA to the N-termini of proteins containing an N-terminal aspartate or glutamate. The chain is Aspartate/glutamate leucyltransferase from Agrobacterium fabrum (strain C58 / ATCC 33970) (Agrobacterium tumefaciens (strain C58)).